Here is a 225-residue protein sequence, read N- to C-terminus: UPF0758 protein swp_2203 (225 aa).

One can recognise an MPN domain in the interval 102-224; it reads ILSDPDLTRD…IVSFAERGWI (123 aa). Positions 173, 175, and 186 each coordinate Zn(2+). The JAMM motif motif lies at 173 to 186; the sequence is HNHPSGIAEPSTAD.

This sequence belongs to the UPF0758 family.

The polypeptide is UPF0758 protein swp_2203 (Shewanella piezotolerans (strain WP3 / JCM 13877)).